The primary structure comprises 341 residues: BZIP domain-containing transcription factor BZP4 (341 aa).

Composition is skewed to polar residues over residues 1–32 (MESSWPAQSSFSYYNQGSMQTSSRHASSPTNE), 61–76 (LTESGGDSLPSFSHSL), 128–139 (PLTSHSRSQITH), and 150–163 (YSSSPNLHQLSPVS). Disordered regions lie at residues 1-95 (MESS…PHGM) and 118-254 (TNHS…DKKQ). The segment covering 178-192 (SPSSSSFPSSIPRTP) has biased composition (low complexity). 2 stretches are compositionally biased toward basic and acidic residues: residues 225 to 234 (TGDRKHEKDS) and 242 to 254 (EEYKKLNPKDKKQ). The basic motif stretch occupies residues 250–269 (KDKKQVRNRIGARRFRAKRK). In terms of domain architecture, bZIP spans 250–308 (KDKKQVRNRIGARRFRAKRKDYVNQLEAGIRLRDDEITNLQSQLESQRNEINELRLQLK). A leucine-zipper region spans residues 279–307 (IRLRDDEITNLQSQLESQRNEINELRLQL).

This sequence belongs to the bZIP family.

It localises to the nucleus. The protein localises to the cytoplasm. In terms of biological role, transcription factor that promotes the production of melanin, a pigment that serves as antioxidant, reactive oxygen species (ROS) scavenger and that protect fungal pathogens from radiation and host immune responses. This Cryptococcus neoformans var. grubii serotype A (strain H99 / ATCC 208821 / CBS 10515 / FGSC 9487) (Filobasidiella neoformans var. grubii) protein is BZIP domain-containing transcription factor BZP4.